The chain runs to 279 residues: tRNA (guanine-N(1)-)-methyltransferase (279 aa).

Residues Gly117 and 141–146 (LGDYVL) contribute to the S-adenosyl-L-methionine site. A disordered region spans residues 256–279 (WTPDGSGFRAGGDPVADSSDTNEP).

The protein belongs to the RNA methyltransferase TrmD family. As to quaternary structure, homodimer.

It localises to the cytoplasm. It catalyses the reaction guanosine(37) in tRNA + S-adenosyl-L-methionine = N(1)-methylguanosine(37) in tRNA + S-adenosyl-L-homocysteine + H(+). Its function is as follows. Specifically methylates guanosine-37 in various tRNAs. This chain is tRNA (guanine-N(1)-)-methyltransferase, found in Kineococcus radiotolerans (strain ATCC BAA-149 / DSM 14245 / SRS30216).